Consider the following 190-residue polypeptide: Glucose-6-phosphate isomerase (190 aa).

4 residues coordinate Fe cation: histidine 89, histidine 91, glutamate 98, and histidine 137.

Belongs to the archaeal-type GPI family. Homodimer. It depends on Fe cation as a cofactor.

It localises to the cytoplasm. It carries out the reaction alpha-D-glucose 6-phosphate = beta-D-fructose 6-phosphate. It functions in the pathway carbohydrate degradation; glycolysis; D-glyceraldehyde 3-phosphate and glycerone phosphate from D-glucose: step 2/4. With respect to regulation, inhibited by mannose 6-phosphate, fructose 1-phosphate and fructose 1,6-bisphosphate. Its activity is also inhibited by Cobalt (II) ions &lt; EDTA &lt; nickel (II) ions &lt; zinc (II) ions &lt;&lt; cadmium (II) ions &lt; copper (II) ions. Sodium and potassium ions and manganese ions show little or no effect on activity. This chain is Glucose-6-phosphate isomerase (pgiA), found in Thermococcus litoralis.